A 333-amino-acid chain; its full sequence is Cap-specific mRNA (nucleoside-2'-O-)-methyltransferase (333 aa).

An mRNA-binding site is contributed by tyrosine 22. Positions 39, 66, 68, 72, 95, 97, 116, and 138 each coordinate S-adenosyl-L-methionine. The tract at residues 169 to 249 is binding to NPH-I; the sequence is PVASSLKWRC…NKIVRNKVVI (81 aa). Residue lysine 175 is the For methyltransferase activity of the active site. Residues 177-180, aspartate 182, 205-207, and glutamate 233 contribute to the mRNA site; these read RCPF and SAE. Over residues 305-320 the composition is skewed to basic and acidic residues; sequence SHEPIQRKISSKDSMS. Residues 305-333 are disordered; sequence SHEPIQRKISSKDSMSKNRNSKRSVRGNK. Over residues 323 to 333 the composition is skewed to basic residues; it reads RNSKRSVRGNK.

Belongs to the class I-like SAM-binding methyltransferase superfamily. Poxvirus/kinetoplastid 2'-O-MTase family. Interacts with poly(A) polymerase catalytic subunit OPG063. Interacts with OPG109 and OPG123; these interactions might help linking transcription to capping and polyadenylation.

The protein resides in the virion. The catalysed reaction is a 5'-end (N(7)-methyl 5'-triphosphoguanosine)-ribonucleoside in mRNA + S-adenosyl-L-methionine = a 5'-end (N(7)-methyl 5'-triphosphoguanosine)-(2'-O-methyl-ribonucleoside) in mRNA + S-adenosyl-L-homocysteine + H(+). Its function is as follows. Displays methyltransferase, positive regulation of the poly(A) polymerase and transcription elongation activities. Involved in the modification of both mRNA ends and in intermediate and late gene positive transcription elongation. At the mRNAs 5' end, methylates the ribose 2' OH group of the first transcribed nucleotide, thereby producing a 2'-O-methylpurine cap. At the 3' end, functions as a processivity factor which stimulates the activity of the viral poly(A) polymerase OPG063 that creates mRNA's poly(A) tail. In the presence of OPG102, OPG063 does not dissociate from the RNA allowing tail elongation to around 250 adenylates. The sequence is that of Cap-specific mRNA (nucleoside-2'-O-)-methyltransferase (OPG102) from Cynomys gunnisoni (Gunnison's prairie dog).